Consider the following 257-residue polypeptide: Large ribosomal subunit protein uL2 (257 aa).

Positions valine 207–alanine 231 are disordered.

The protein belongs to the universal ribosomal protein uL2 family. In terms of assembly, component of the large ribosomal subunit.

It localises to the cytoplasm. Functionally, component of the large ribosomal subunit. The ribosome is a large ribonucleoprotein complex responsible for the synthesis of proteins in the cell. In Xenopus tropicalis (Western clawed frog), this protein is Large ribosomal subunit protein uL2 (rpl8).